Consider the following 280-residue polypeptide: 2-dehydro-3-deoxyphosphooctonate aldolase (280 aa).

This sequence belongs to the KdsA family.

The protein localises to the cytoplasm. The catalysed reaction is D-arabinose 5-phosphate + phosphoenolpyruvate + H2O = 3-deoxy-alpha-D-manno-2-octulosonate-8-phosphate + phosphate. The protein operates within carbohydrate biosynthesis; 3-deoxy-D-manno-octulosonate biosynthesis; 3-deoxy-D-manno-octulosonate from D-ribulose 5-phosphate: step 2/3. It participates in bacterial outer membrane biogenesis; lipopolysaccharide biosynthesis. This Neisseria meningitidis serogroup B (strain ATCC BAA-335 / MC58) protein is 2-dehydro-3-deoxyphosphooctonate aldolase.